Reading from the N-terminus, the 102-residue chain is MANKKIRIRLKAYEHRTLDTAAAKIVETATRTGAEVAGPIPLPTERSLYTIIRATHKYKDSREQFEMRTHKRLIDIINPTQKTVDALMKLDLPSGVNVEIKL.

Belongs to the universal ribosomal protein uS10 family. In terms of assembly, part of the 30S ribosomal subunit.

Functionally, involved in the binding of tRNA to the ribosomes. This chain is Small ribosomal subunit protein uS10, found in Streptococcus sanguinis (strain SK36).